The sequence spans 73 residues: MAKEDHIEMAGTVIDTLPNTMFRVELENGHIVTAHISGRMRKNYIRILTGDKVKVELTPYDLSKGRIIFRDKG.

The 72-residue stretch at 1–72 (MAKEDHIEMA…SKGRIIFRDK (72 aa)) folds into the S1-like domain.

Belongs to the IF-1 family. Component of the 30S ribosomal translation pre-initiation complex which assembles on the 30S ribosome in the order IF-2 and IF-3, IF-1 and N-formylmethionyl-tRNA(fMet); mRNA recruitment can occur at any time during PIC assembly.

The protein localises to the cytoplasm. Its function is as follows. One of the essential components for the initiation of protein synthesis. Stabilizes the binding of IF-2 and IF-3 on the 30S subunit to which N-formylmethionyl-tRNA(fMet) subsequently binds. Helps modulate mRNA selection, yielding the 30S pre-initiation complex (PIC). Upon addition of the 50S ribosomal subunit IF-1, IF-2 and IF-3 are released leaving the mature 70S translation initiation complex. In Legionella pneumophila (strain Paris), this protein is Translation initiation factor IF-1.